Here is a 363-residue protein sequence, read N- to C-terminus: Lipoyl synthase (363 aa).

The [4Fe-4S] cluster site is built by C55, C60, C66, C81, C85, C88, and S292. The 215-residue stretch at 67 to 281 folds into the Radical SAM core domain; sequence WESREATFLI…SKLAKELGFG (215 aa). The interval 338–363 is disordered; that stretch reads PSEETPVTTRMAKTPAQSNSVAATIR. Residues 352–363 show a composition bias toward polar residues; the sequence is PAQSNSVAATIR.

This sequence belongs to the radical SAM superfamily. Lipoyl synthase family. It depends on [4Fe-4S] cluster as a cofactor.

The protein resides in the cytoplasm. It carries out the reaction [[Fe-S] cluster scaffold protein carrying a second [4Fe-4S](2+) cluster] + N(6)-octanoyl-L-lysyl-[protein] + 2 oxidized [2Fe-2S]-[ferredoxin] + 2 S-adenosyl-L-methionine + 4 H(+) = [[Fe-S] cluster scaffold protein] + N(6)-[(R)-dihydrolipoyl]-L-lysyl-[protein] + 4 Fe(3+) + 2 hydrogen sulfide + 2 5'-deoxyadenosine + 2 L-methionine + 2 reduced [2Fe-2S]-[ferredoxin]. Its pathway is protein modification; protein lipoylation via endogenous pathway; protein N(6)-(lipoyl)lysine from octanoyl-[acyl-carrier-protein]: step 2/2. Functionally, catalyzes the radical-mediated insertion of two sulfur atoms into the C-6 and C-8 positions of the octanoyl moiety bound to the lipoyl domains of lipoate-dependent enzymes, thereby converting the octanoylated domains into lipoylated derivatives. This is Lipoyl synthase from Corynebacterium aurimucosum (strain ATCC 700975 / DSM 44827 / CIP 107346 / CN-1) (Corynebacterium nigricans).